A 152-amino-acid chain; its full sequence is MGKGVAVLNSSEGVKGTIFFAQEGEGKTTVTGTVSGLKPGLHGFHVHALGDTTNGSMSTGPHFNPDGKQHGAPEDANRHAGDLGNIIVGDDGTATFTITDCQIPLSGPNSIVGRAVVVHADPDVLGKGGHELSLTTGNAGGRVACGIIGLQG.

Residues His45, His47, and His62 each contribute to the Cu cation site. A disordered region spans residues 53–81; the sequence is TNGSMSTGPHFNPDGKQHGAPEDANRHAG. 4 residues coordinate Zn(2+): His62, His70, His79, and Asp82. The segment covering 65–81 has biased composition (basic and acidic residues); the sequence is PDGKQHGAPEDANRHAG. His119 serves as a coordination point for Cu cation.

It belongs to the Cu-Zn superoxide dismutase family. As to quaternary structure, homodimer. Requires Cu cation as cofactor. The cofactor is Zn(2+).

The protein localises to the cytoplasm. The catalysed reaction is 2 superoxide + 2 H(+) = H2O2 + O2. Destroys radicals which are normally produced within the cells and which are toxic to biological systems. This Brassica juncea (Indian mustard) protein is Superoxide dismutase [Cu-Zn] 2 (SODCC2).